Consider the following 359-residue polypeptide: PWWP domain-containing protein 1 (359 aa).

Residues 1–37 (MNNARTNAKRRRLSSKQGGLSISEGKESNIPSVVEES) are disordered. Positions 52–114 (FGDRILVKAP…RNSVKPLLDS (63 aa)) constitute a PWWP domain. Disordered regions lie at residues 133–161 (AYEASKTPPDLKEESSTDEEMDSLSAAEE) and 204–255 (VAST…SPLN). Residues 204–224 (VASTSRSSTQLSDQRYPLSSN) show a composition bias toward polar residues. A Phosphoserine modification is found at S252.

As to quaternary structure, interacts with set9 and histone H4K20me1. Associates with nucleosomes.

The protein resides in the nucleus. Functionally, necessary for DNA damage checkpoint activation. Required for the association of set9 with chromatin and subsequent methylation of H4K20. Associates with H4K20me1 to increase the concentration of set9 on chromatin to perform H4K20me3. H4K20me3 is mainly enriched at heterochromatin and is required for proper heterochromatin assembly. This is PWWP domain-containing protein 1 (pdp1) from Schizosaccharomyces pombe (strain 972 / ATCC 24843) (Fission yeast).